Consider the following 284-residue polypeptide: Nucleotide-binding protein VSAL_I0495 (284 aa).

8-15 is an ATP binding site; it reads GNSGAGKS. 56–59 serves as a coordination point for GTP; the sequence is DIRN.

This sequence belongs to the RapZ-like family.

Its function is as follows. Displays ATPase and GTPase activities. This chain is Nucleotide-binding protein VSAL_I0495, found in Aliivibrio salmonicida (strain LFI1238) (Vibrio salmonicida (strain LFI1238)).